A 251-amino-acid polypeptide reads, in one-letter code: Phosphate import ATP-binding protein PstB (251 aa).

The ABC transporter domain maps to 5-246 (IEIENFSAYY…PKNRLTEEYL (242 aa)). 37 to 44 (GPSGCGKT) contributes to the ATP binding site.

The protein belongs to the ABC transporter superfamily. Phosphate importer (TC 3.A.1.7) family. As to quaternary structure, the complex is composed of two ATP-binding proteins (PstB), two transmembrane proteins (PstC and PstA) and a solute-binding protein (PstS).

The protein resides in the cell inner membrane. The enzyme catalyses phosphate(out) + ATP + H2O = ADP + 2 phosphate(in) + H(+). Part of the ABC transporter complex PstSACB involved in phosphate import. Responsible for energy coupling to the transport system. The chain is Phosphate import ATP-binding protein PstB from Thermotoga maritima (strain ATCC 43589 / DSM 3109 / JCM 10099 / NBRC 100826 / MSB8).